Reading from the N-terminus, the 189-residue chain is Chitin synthase 1 (189 aa).

It belongs to the chitin synthase family.

The protein localises to the cell membrane. It carries out the reaction [(1-&gt;4)-N-acetyl-beta-D-glucosaminyl](n) + UDP-N-acetyl-alpha-D-glucosamine = [(1-&gt;4)-N-acetyl-beta-D-glucosaminyl](n+1) + UDP + H(+). Functionally, polymerizes chitin, a structural polymer of the cell wall and septum, by transferring the sugar moiety of UDP-GlcNAc to the non-reducing end of the growing chitin polymer. This is Chitin synthase 1 (CHS1) from Xylohypha bantiana.